A 424-amino-acid polypeptide reads, in one-letter code: Serine--tRNA ligase (424 aa).

229–231 (TAE) is an L-serine binding site. 260-262 (RSE) serves as a coordination point for ATP. E283 contacts L-serine. An ATP-binding site is contributed by 347 to 350 (EISS). Position 383 (S383) interacts with L-serine.

The protein belongs to the class-II aminoacyl-tRNA synthetase family. Type-1 seryl-tRNA synthetase subfamily. As to quaternary structure, homodimer. The tRNA molecule binds across the dimer.

The protein localises to the cytoplasm. The enzyme catalyses tRNA(Ser) + L-serine + ATP = L-seryl-tRNA(Ser) + AMP + diphosphate + H(+). It catalyses the reaction tRNA(Sec) + L-serine + ATP = L-seryl-tRNA(Sec) + AMP + diphosphate + H(+). It functions in the pathway aminoacyl-tRNA biosynthesis; selenocysteinyl-tRNA(Sec) biosynthesis; L-seryl-tRNA(Sec) from L-serine and tRNA(Sec): step 1/1. Its function is as follows. Catalyzes the attachment of serine to tRNA(Ser). Is also able to aminoacylate tRNA(Sec) with serine, to form the misacylated tRNA L-seryl-tRNA(Sec), which will be further converted into selenocysteinyl-tRNA(Sec). In Gluconacetobacter diazotrophicus (strain ATCC 49037 / DSM 5601 / CCUG 37298 / CIP 103539 / LMG 7603 / PAl5), this protein is Serine--tRNA ligase.